The following is a 430-amino-acid chain: Enolase (430 aa).

Gln163 provides a ligand contact to (2R)-2-phosphoglycerate. The Proton donor role is filled by Glu205. Mg(2+) is bound by residues Asp242, Glu285, and Asp312. Residues Lys337, Arg366, Ser367, and Lys388 each coordinate (2R)-2-phosphoglycerate. Lys337 functions as the Proton acceptor in the catalytic mechanism.

This sequence belongs to the enolase family. The cofactor is Mg(2+).

It is found in the cytoplasm. It localises to the secreted. The protein localises to the cell surface. The enzyme catalyses (2R)-2-phosphoglycerate = phosphoenolpyruvate + H2O. It participates in carbohydrate degradation; glycolysis; pyruvate from D-glyceraldehyde 3-phosphate: step 4/5. Functionally, catalyzes the reversible conversion of 2-phosphoglycerate (2-PG) into phosphoenolpyruvate (PEP). It is essential for the degradation of carbohydrates via glycolysis. This Bifidobacterium animalis subsp. lactis (strain AD011) protein is Enolase.